Consider the following 592-residue polypeptide: Tetrathionate sensor histidine kinase TtrS (592 aa).

2 helical membrane passes run 11–31 (VLAA…NIGI) and 307–327 (VGGV…VMLL). In terms of domain architecture, Histidine kinase spans 364–581 (GFAHELNQPL…VVTIHFLHEN (218 aa)). H367 carries the phosphohistidine; by autocatalysis modification.

Autophosphorylated.

The protein localises to the cell inner membrane. The enzyme catalyses ATP + protein L-histidine = ADP + protein N-phospho-L-histidine.. Its function is as follows. Member of the two-component regulatory system TtrR/TtrS, which is required for synthesis of tetrathionate reductase. Probably functions as a sensor protein kinase which is autophosphorylated at a histidine residue in response to tetrathionate, and transfers its phosphate group to TtrR. During mice infection, the ability to use tetrathionate as an electron acceptor is a growth advantage for S.typhimurium over the competing microbiota in the lumen of the inflamed gut. The protein is Tetrathionate sensor histidine kinase TtrS (ttrS) of Salmonella typhimurium (strain LT2 / SGSC1412 / ATCC 700720).